An 860-amino-acid polypeptide reads, in one-letter code: Leucine--tRNA ligase (860 aa).

The short motif at 42-52 (PYPSGRLHMGH) is the 'HIGH' region element. A 'KMSKS' region motif is present at residues 619–623 (KMSKS). Lys622 is an ATP binding site.

It belongs to the class-I aminoacyl-tRNA synthetase family.

It is found in the cytoplasm. The catalysed reaction is tRNA(Leu) + L-leucine + ATP = L-leucyl-tRNA(Leu) + AMP + diphosphate. This Histophilus somni (strain 2336) (Haemophilus somnus) protein is Leucine--tRNA ligase.